We begin with the raw amino-acid sequence, 258 residues long: Gamma-secretase subunit Aph-1b (258 aa).

7 consecutive transmembrane segments (helical) span residues 3–23, 32–52, 70–90, 118–138, 161–181, 187–207, and 214–234; these read VAVF…LFMF, VIFL…SSLV, GLLI…RYGY, AYVS…VNIL, AFMT…FFEA, WWAL…TFVN, and LIPT…CAGG.

Belongs to the APH-1 family. As to quaternary structure, component of the gamma-secretase complex, a complex composed of a presenilin homodimer (PSEN1 or PSEN2), nicastrin (NCSTN), APH1 and PEN2.

It is found in the membrane. In terms of biological role, essential subunit of the gamma-secretase complex, an endoprotease complex that catalyzes the intramembrane cleavage of integral proteins such as Notch receptors. It may represent a stabilizing cofactor for the presenilin homodimer that promotes the formation of a stable complex. This Danio rerio (Zebrafish) protein is Gamma-secretase subunit Aph-1b (aph1b).